Reading from the N-terminus, the 312-residue chain is Glyoxylate/hydroxypyruvate reductase A (312 aa).

Residue R227 is part of the active site. H275 functions as the Proton donor in the catalytic mechanism.

The protein belongs to the D-isomer specific 2-hydroxyacid dehydrogenase family. GhrA subfamily.

It localises to the cytoplasm. It catalyses the reaction glycolate + NADP(+) = glyoxylate + NADPH + H(+). It carries out the reaction (R)-glycerate + NAD(+) = 3-hydroxypyruvate + NADH + H(+). The catalysed reaction is (R)-glycerate + NADP(+) = 3-hydroxypyruvate + NADPH + H(+). Functionally, catalyzes the NADPH-dependent reduction of glyoxylate and hydroxypyruvate into glycolate and glycerate, respectively. The sequence is that of Glyoxylate/hydroxypyruvate reductase A from Escherichia coli O7:K1 (strain IAI39 / ExPEC).